The primary structure comprises 238 residues: Cysteine-rich venom protein (238 aa).

The N-terminal stretch at 1-19 (MIAFIVLLSLAAVLQQSSG) is a signal peptide. Residues 38–164 (VDKHNALRRS…STKYLYVCQY (127 aa)) form the SCP domain. Cystine bridges form between C75-C153, C92-C165, C148-C162, C184-C191, C187-C196, C200-C233, C209-C227, and C218-C231. One can recognise a ShKT domain in the interval 200–233 (CKYEDAFTNCKALAKKTKCKTEWIKSKCPATCFC).

This sequence belongs to the CRISP family. As to expression, expressed by the venom gland.

It is found in the secreted. Blocks contraction of smooth muscle elicited by high potassium-induced depolarization, but does not block caffeine-stimulated contraction. May target voltage-gated calcium channels on smooth muscle. The sequence is that of Cysteine-rich venom protein from Austrelaps superbus (Lowland copperhead snake).